A 295-amino-acid polypeptide reads, in one-letter code: Mycothiol acetyltransferase (295 aa).

Residue glutamate 30 coordinates 1D-myo-inositol 2-(L-cysteinylamino)-2-deoxy-alpha-D-glucopyranoside. 62–64 (LVV) is a binding site for acetyl-CoA. The N-acetyltransferase domain occupies 137-295 (VTVRAFRADS…DDDTHVQYRR (159 aa)). Residues glutamate 165, lysine 209, and glutamate 227 each contribute to the 1D-myo-inositol 2-(L-cysteinylamino)-2-deoxy-alpha-D-glucopyranoside site. Acetyl-CoA is bound by residues 231 to 233 (VGI) and 238 to 244 (QGRGLGK). Residue tyrosine 265 participates in 1D-myo-inositol 2-(L-cysteinylamino)-2-deoxy-alpha-D-glucopyranoside binding.

This sequence belongs to the acetyltransferase family. MshD subfamily. As to quaternary structure, monomer.

It catalyses the reaction 1D-myo-inositol 2-(L-cysteinylamino)-2-deoxy-alpha-D-glucopyranoside + acetyl-CoA = mycothiol + CoA + H(+). Its function is as follows. Catalyzes the transfer of acetyl from acetyl-CoA to desacetylmycothiol (Cys-GlcN-Ins) to form mycothiol. The sequence is that of Mycothiol acetyltransferase from Nocardioides sp. (strain ATCC BAA-499 / JS614).